Consider the following 119-residue polypeptide: Small ribosomal subunit protein eS25 (119 aa).

Residues 1 to 42 (MPPKKDTKASAKQPQKTQKKKEGSGGGKAKKKKWSKGKVRDK) are disordered. The segment covering 28 to 37 (KAKKKKWSKG) has biased composition (basic residues).

It belongs to the eukaryotic ribosomal protein eS25 family.

The polypeptide is Small ribosomal subunit protein eS25 (RpS25) (Spodoptera frugiperda (Fall armyworm)).